The primary structure comprises 161 residues: Ferredoxin/F(420)H(2)-dependent CoB-CoM heterodisulfide reductase subunit C (161 aa).

4Fe-4S ferredoxin-type domains lie at 10–40 and 51–82; these read KAEG…LNTR and AAVL…TDAI. Cysteine 19, cysteine 22, cysteine 25, cysteine 29, cysteine 62, cysteine 65, cysteine 68, and cysteine 72 together coordinate [4Fe-4S] cluster.

This sequence belongs to the HdrC family. As to quaternary structure, the ferredoxin/F(420)H(2)-dependent CoB-CoM heterodisulfide reductase is composed of three subunits; HdrA2, HdrB2 and HdrC2. The cofactor is [4Fe-4S] cluster.

It is found in the cytoplasm. The catalysed reaction is coenzyme B + coenzyme M + 2 oxidized [2Fe-2S]-[ferredoxin] = coenzyme M-coenzyme B heterodisulfide + 2 reduced [2Fe-2S]-[ferredoxin] + 2 H(+). It carries out the reaction coenzyme B + 2 oxidized coenzyme F420-(gamma-L-Glu)(n) + coenzyme M + 2 reduced [2Fe-2S]-[ferredoxin] + 4 H(+) = coenzyme M-coenzyme B heterodisulfide + 2 reduced coenzyme F420-(gamma-L-Glu)(n) + 2 oxidized [2Fe-2S]-[ferredoxin]. It functions in the pathway cofactor metabolism; coenzyme M-coenzyme B heterodisulfide reduction; coenzyme B and coenzyme M from coenzyme M-coenzyme B heterodisulfide: step 1/1. Functionally, part of a complex that catalyzes the reversible reduction of CoM-S-S-CoB to the thiol-coenzymes H-S-CoM (coenzyme M) and H-S-CoB (coenzyme B). Catalyzes the transfer of electrons from ferredoxin to CoM-S-S-CoB during methanogenesis from acetate. Electrons transfer from ferredoxin to CoM-S-S-CoB via HdrA2, HdrC2 and HdrB2. In addition, the complex can use electron bifurcation to direct electron pairs from reduced coenzyme F420 towards the reduction of both ferredoxin and CoB-CoM heterodisulfide. This activity may take place during Fe(III)-dependent anaerobic methane oxidation. This Methanosarcina acetivorans (strain ATCC 35395 / DSM 2834 / JCM 12185 / C2A) protein is Ferredoxin/F(420)H(2)-dependent CoB-CoM heterodisulfide reductase subunit C.